The primary structure comprises 481 residues: Heat stress transcription factor A-1b (481 aa).

Residues 1 to 16 are compositionally biased toward low complexity; it reads MESVPESVPSPNSNTP. Residues 1–23 are disordered; sequence MESVPESVPSPNSNTPSIPPPVN. Residues 25–119 mediate DNA binding; it reads VPPFLSKTYD…LLKSIVRRKP (95 aa). The hydrophobic repeat HR-A/B stretch occupies residues 138-204; the sequence is ACVEVGKFGI…QMMSFLAKAV (67 aa). The segment covering 213–227 has biased composition (polar residues); that stretch reads LVQQNNNDGNRQIPG. The segment at 213-244 is disordered; that stretch reads LVQQNNNDGNRQIPGSNKKRRLPVDEQENRGD. The short motif at 229 to 233 is the Nuclear localization signal element; it reads NKKRR. Basic and acidic residues predominate over residues 234 to 243; sequence LPVDEQENRG. Residues 418 to 427 carry the AHA motif; the sequence is DPFWEQFFSV. Positions 467-474 match the Nuclear export signal motif; that stretch reads LTEQMGLL.

The protein belongs to the HSF family. Class A subfamily. Homotrimer. Binds to HSBP. Exhibits temperature-dependent phosphorylation.

It localises to the cytoplasm. Its subcellular location is the nucleus. Its function is as follows. Transcriptional activator that specifically binds DNA sequence 5'-AGAAnnTTCT-3' known as heat shock promoter elements (HSE). The sequence is that of Heat stress transcription factor A-1b (HSFA1B) from Arabidopsis thaliana (Mouse-ear cress).